The following is a 1665-amino-acid chain: Mediator of RNA polymerase II transcription subunit 13 (1665 aa).

Disordered regions lie at residues 411–460, 482–512, 551–580, and 673–781; these read KETE…IDKN, INLD…ETKP, TVSQ…GTET, and LDSS…NQIS. Acidic residues predominate over residues 415–445; that stretch reads PENESENDMEIDDLFGGDESDDNDDLEEAGN. Residues 499 to 512 are compositionally biased toward basic and acidic residues; it reads VPDKENFKPKETKP. Residues 551-568 are compositionally biased toward low complexity; sequence TVSQSAVTTNPPSVGSAP. Positions 682-720 are enriched in acidic residues; sequence EGGEDIEDDDNDYEDEGDDDEEEEGEEEEEEESDEDEIS. The span at 728–762 shows a compositional bias: polar residues; sequence LKLNTQNESVPPQQSNYNPVNITDSGSNTTNNITD.

This sequence belongs to the Mediator complex subunit 13 family. In terms of assembly, component of the SRB8-11 complex, which itself associates with the Mediator complex.

It localises to the nucleus. Component of the SRB8-11 complex. The SRB8-11 complex is a regulatory module of the Mediator complex which is itself involved in regulation of basal and activated RNA polymerase II-dependent transcription. The SRB8-11 complex may be involved in the transcriptional repression of a subset of genes regulated by Mediator. It may inhibit the association of the Mediator complex with RNA polymerase II to form the holoenzyme complex. In Candida albicans (strain SC5314 / ATCC MYA-2876) (Yeast), this protein is Mediator of RNA polymerase II transcription subunit 13 (SSN2).